A 66-amino-acid chain; its full sequence is UPF0391 membrane protein AM1_5042 (66 aa).

Helical transmembrane passes span leucine 4–alanine 24 and alanine 28–proline 47.

Belongs to the UPF0391 family.

It is found in the cell membrane. This chain is UPF0391 membrane protein AM1_5042, found in Acaryochloris marina (strain MBIC 11017).